A 175-amino-acid polypeptide reads, in one-letter code: DASH complex subunit DAM1 (175 aa).

Positions 1 to 39 are disordered; sequence MAPEDTNPQSSHRRTRSTSRSRPTTPLRPSSRSSFRSSA. Positions 20 to 39 are enriched in low complexity; that stretch reads RSRPTTPLRPSSRSSFRSSA.

This sequence belongs to the DASH complex DAM1 family. In terms of assembly, component of the DASH complex consisting of ASK1, DAD1, DAD2, DAD3, DAD4, DAM1, DUO1, HSK3, SPC19 and SPC34, with a stoichiometry of one copy of each subunit per complex. Multiple DASH complexes oligomerize to form a ring that encircles spindle microtubules and organizes the rod-like NDC80 complexes of the outer kinetochore. DASH complex oligomerization strengthens microtubule attachments. On cytoplasmic microtubules, DASH complexes appear to form patches instead of rings.

The protein resides in the chromosome. The protein localises to the centromere. It is found in the kinetochore. It localises to the cytoplasm. Its subcellular location is the cytoskeleton. The protein resides in the spindle. The protein localises to the nucleus. Functionally, component of the DASH complex that connects microtubules with kinetochores and couples microtubule depolymerisation to chromosome movement; it is involved in retrieving kinetochores to the spindle poles before their re-orientation on the spindle in early mitosis and allows microtubule depolymerization to pull chromosomes apart and resist detachment during anaphase. Kinetochores, consisting of a centromere-associated inner segment and a microtubule-contacting outer segment, play a crucial role in chromosome segregation by mediating the physical connection between centromeric DNA and microtubules. Kinetochores also serve as an input point for the spindle assembly checkpoint, which delays anaphase until all chromosomes have bioriented on the mitotic spindle. The protein is DASH complex subunit DAM1 of Chaetomium thermophilum (strain DSM 1495 / CBS 144.50 / IMI 039719) (Thermochaetoides thermophila).